A 212-amino-acid chain; its full sequence is Large ribosomal subunit protein uL3 (212 aa).

The disordered stretch occupies residues 129 to 156; it reads RRGPMGHGSKNHRAPGSTGAGTTPGRIY. The segment covering 142-153 has biased composition (low complexity); that stretch reads APGSTGAGTTPG.

Belongs to the universal ribosomal protein uL3 family. Part of the 50S ribosomal subunit. Forms a cluster with proteins L14 and L19.

Functionally, one of the primary rRNA binding proteins, it binds directly near the 3'-end of the 23S rRNA, where it nucleates assembly of the 50S subunit. This Acaryochloris marina (strain MBIC 11017) protein is Large ribosomal subunit protein uL3.